The primary structure comprises 191 residues: MKKQLLSALIGVSLLVPMAASAADYVIDTEGAHASITFKVNHLGYSYVVGRFNDFSGDFSYDAAKPTAMTVNVTVNTLSVDSNHAERDKHIRGEDFLNTGKFAKATFASTSVEDKGNGDLVINGNLTLNGVTKPLAIKAHAVGEGQDPWGGYRAGFTGTTTFAMKDFGIKMDLGPASSHVELDLVVEGVRK.

The N-terminal stretch at 1–22 (MKKQLLSALIGVSLLVPMAASA) is a signal peptide.

This sequence belongs to the UPF0312 family. Type 1 subfamily.

Its subcellular location is the periplasm. The chain is UPF0312 protein Sputw3181_1309 from Shewanella sp. (strain W3-18-1).